The sequence spans 603 residues: Keratin, type II cuticular Hb4 (603 aa).

Positions 1–173 (MSCRSYRVSS…PNAQRVKRDE (173 aa)) are head. One can recognise an IF rod domain in the interval 173-484 (EKEQIKTLNN…RLLEGEEIRI (312 aa)). The interval 174–208 (KEQIKTLNNKFASFIDKVRFLEQQNKLLETKWSFL) is coil 1A. The interval 209–218 (QEQKCARSNL) is linker 1. Positions 219–319 (EPLFDNYITN…YHEEIEMLQS (101 aa)) are coil 1B. A linker 12 region spans residues 320–336 (HISETSVIVKMDNSRDL). The tract at residues 337–480 (NLDGIIAEVK…VTYRRLLEGE (144 aa)) is coil 2. The tract at residues 481–603 (EIRICEGVGP…STTTSRRTRY (123 aa)) is tail. Positions 579–603 (CSGGRGNRSSSVRFSSTTTSRRTRY) are disordered.

It belongs to the intermediate filament family. Heterotetramer of two type I and two type II keratins. As to expression, in skin, only expressed in the suprabasal cells of tail scale epidermis. Suprabasally expressed in stratified squamous epithelia and also in the posterior unit of the complex filiform papillae of tongue. Expressed in rare anatomical sites in which an orthokeratinized stratum corneum would be too soft and a hard keratinized structure would be too rigid to meet the functional requirement of the respective epithelia.

This chain is Keratin, type II cuticular Hb4 (Krt84), found in Mus musculus (Mouse).